The primary structure comprises 195 residues: Cysteine/O-acetylserine efflux protein (195 aa).

Helical transmembrane passes span 47–67, 70–90, 105–125, 142–162, and 177–194; these read SLGF…LAVI, AAVH…AWKI, ISFW…LYGV, VVGV…CWAL, and QLNI…VRIF.

Belongs to the Rht family.

The protein resides in the cell inner membrane. It catalyses the reaction O-acetyl-L-serine(in) = O-acetyl-L-serine(out). The catalysed reaction is L-cysteine(in) = L-cysteine(out). Its function is as follows. Exporter of O-acetylserine (OAS) and cysteine. The chain is Cysteine/O-acetylserine efflux protein (eamB) from Shigella boydii serotype 4 (strain Sb227).